Here is a 280-residue protein sequence, read N- to C-terminus: 2,3,4,5-tetrahydropyridine-2,6-dicarboxylate N-succinyltransferase (280 aa).

Positions 107 and 144 each coordinate substrate.

The protein belongs to the transferase hexapeptide repeat family. As to quaternary structure, homotrimer.

It is found in the cytoplasm. It carries out the reaction (S)-2,3,4,5-tetrahydrodipicolinate + succinyl-CoA + H2O = (S)-2-succinylamino-6-oxoheptanedioate + CoA. The protein operates within amino-acid biosynthesis; L-lysine biosynthesis via DAP pathway; LL-2,6-diaminopimelate from (S)-tetrahydrodipicolinate (succinylase route): step 1/3. The chain is 2,3,4,5-tetrahydropyridine-2,6-dicarboxylate N-succinyltransferase from Granulibacter bethesdensis (strain ATCC BAA-1260 / CGDNIH1).